The sequence spans 935 residues: Isoleucine--tRNA ligase (935 aa).

Positions 58-68 (PYANGSIHVGH) match the 'HIGH' region motif. An L-isoleucyl-5'-AMP-binding site is contributed by glutamate 558. A 'KMSKS' region motif is present at residues 599–603 (KMSKS). An ATP-binding site is contributed by lysine 602. Zn(2+) is bound by residues cysteine 897, cysteine 900, cysteine 917, and cysteine 920.

This sequence belongs to the class-I aminoacyl-tRNA synthetase family. IleS type 1 subfamily. Monomer. It depends on Zn(2+) as a cofactor.

The protein resides in the cytoplasm. The catalysed reaction is tRNA(Ile) + L-isoleucine + ATP = L-isoleucyl-tRNA(Ile) + AMP + diphosphate. Functionally, catalyzes the attachment of isoleucine to tRNA(Ile). As IleRS can inadvertently accommodate and process structurally similar amino acids such as valine, to avoid such errors it has two additional distinct tRNA(Ile)-dependent editing activities. One activity is designated as 'pretransfer' editing and involves the hydrolysis of activated Val-AMP. The other activity is designated 'posttransfer' editing and involves deacylation of mischarged Val-tRNA(Ile). This Francisella tularensis subsp. tularensis (strain WY96-3418) protein is Isoleucine--tRNA ligase.